We begin with the raw amino-acid sequence, 183 residues long: Intraflagellar transport protein 27 homolog (183 aa).

GTP is bound by residues 12–19, 63–67, and 120–123; these read GAPTVGKT, DVSGQ, and NKSD.

This sequence belongs to the small GTPase superfamily. Rab family. As to quaternary structure, component of the IFT complex B.

It is found in the cell projection. The protein localises to the cilium. Its subcellular location is the flagellum. In terms of biological role, small GTPase-like component of the intraflagellar transport (IFT) complex B required for both anterograde and retrograde intraflagellar transport. May be involved in cargo loading of the retrograde transport. The chain is Intraflagellar transport protein 27 homolog from Trypanosoma brucei brucei (strain 927/4 GUTat10.1).